The following is a 468-amino-acid chain: Plant UBX domain-containing protein 7 (468 aa).

Residue Met-1 is modified to N-acetylmethionine. A UBA-like domain is found at 7–48 (SGDQQRLVSSFLEIAVGQTAETARQFLQATSWKLEEAIQLFY). Disordered regions lie at residues 138–168 (KSPG…SAPR) and 299–329 (HFAS…KDEE). Residues 150-166 (SSASASASASASESASA) show a composition bias toward low complexity. Positions 328 to 347 (EEEEELQRALAASLEDNNMK) constitute a UIM domain. Residues 385–466 (DRSLQCRVGI…GVANSMISAT (82 aa)) enclose the UBX domain.

In terms of assembly, interacts with CDC48A via its UBX domain and with ubiquitin via its N-terminal UBA-like domain. As to expression, expressed broadly in sporophyte and gametophyte cells.

The protein localises to the nucleus. In terms of biological role, acts as a bridge between CDC48A and ubiquitin, suggesting a role in targeted protein degradation. The protein is Plant UBX domain-containing protein 7 of Arabidopsis thaliana (Mouse-ear cress).